A 430-amino-acid chain; its full sequence is Adenylosuccinate synthetase (430 aa).

GTP is bound by residues 12–18 and 40–42; these read GDEGKGK and GHT. The active-site Proton acceptor is Asp13. Residues Asp13 and Gly40 each contribute to the Mg(2+) site. IMP-binding positions include 13–16, 38–41, Thr128, Arg142, Gln223, Thr238, and Arg302; these read DEGK and NAGH. His41 (proton donor) is an active-site residue. Residue 298–304 coordinates substrate; sequence TTTGRPR. GTP contacts are provided by residues Arg304, 330–332, and 412–414; these read SID and SVG.

This sequence belongs to the adenylosuccinate synthetase family. As to quaternary structure, homodimer. The cofactor is Mg(2+).

It localises to the cytoplasm. The enzyme catalyses IMP + L-aspartate + GTP = N(6)-(1,2-dicarboxyethyl)-AMP + GDP + phosphate + 2 H(+). The protein operates within purine metabolism; AMP biosynthesis via de novo pathway; AMP from IMP: step 1/2. In terms of biological role, plays an important role in the de novo pathway of purine nucleotide biosynthesis. Catalyzes the first committed step in the biosynthesis of AMP from IMP. This is Adenylosuccinate synthetase from Streptococcus equi subsp. equi (strain 4047).